The chain runs to 426 residues: MFLRSFLCLLCLLPSILYCADLEIHVRAESSLLPVNVSLLSSPKDTKQGSYLASLRDLFARDLALGDLLAPTKEIAPLTVFIEASYPELIFSIKKDGKGAQKIFSLELSGNPSKDHQSIHEAADRIHFLLTHTPGISSGKIIFSLCSTNSSEELKQGELWSVDYDGQHLAPLTNEHSLSVTPAWMHISHIPAYIYVSYKLGVPKIFLNTLSQPTGKKILAMQGNQFMPAFSPKTKLLAFISDRDGNPDLFVQSFSLATGAIGTPKKLLNEAFGTQGNPSFSPDGTRLVFVSNKDGTPRIYQMQIYPEQHPPRLLTKKYRNSSCPTWSPDGKKIAFCSVIKGVRQICVYDLASGRDEQLTTSAEHKESPSWAADSNHLVYSAGSSSTSELFLLSLITKKSRKIVIGSGEKRFPCWGAFPSQHIKKAS.

A signal peptide spans 1–19; that stretch reads MFLRSFLCLLCLLPSILYC.

Belongs to the TolB family.

The protein resides in the periplasm. The sequence is that of Protein TolB homolog from Chlamydia muridarum (strain MoPn / Nigg).